The sequence spans 143 residues: Deoxyuridine 5'-triphosphate nucleotidohydrolase (143 aa).

Residues 62–64, N75, and 79–81 each bind substrate; these read RSG and TID.

Belongs to the dUTPase family. Requires Mg(2+) as cofactor.

The catalysed reaction is dUTP + H2O = dUMP + diphosphate + H(+). It participates in pyrimidine metabolism; dUMP biosynthesis; dUMP from dCTP (dUTP route): step 2/2. In terms of biological role, this enzyme is involved in nucleotide metabolism: it produces dUMP, the immediate precursor of thymidine nucleotides and it decreases the intracellular concentration of dUTP so that uracil cannot be incorporated into DNA. The polypeptide is Deoxyuridine 5'-triphosphate nucleotidohydrolase (Acaryochloris marina (strain MBIC 11017)).